A 254-amino-acid chain; its full sequence is Type III pantothenate kinase (254 aa).

6–13 (DVGNTNIV) is an ATP binding site. Substrate is bound by residues phenylalanine 100 and 107 to 110 (GADR). Aspartate 109 (proton acceptor) is an active-site residue. Residue aspartate 129 participates in K(+) binding. Residue threonine 132 coordinates ATP. Threonine 184 provides a ligand contact to substrate.

Belongs to the type III pantothenate kinase family. Homodimer. It depends on NH4(+) as a cofactor. K(+) serves as cofactor.

Its subcellular location is the cytoplasm. The enzyme catalyses (R)-pantothenate + ATP = (R)-4'-phosphopantothenate + ADP + H(+). Its pathway is cofactor biosynthesis; coenzyme A biosynthesis; CoA from (R)-pantothenate: step 1/5. Functionally, catalyzes the phosphorylation of pantothenate (Pan), the first step in CoA biosynthesis. The chain is Type III pantothenate kinase from Moorella thermoacetica (strain ATCC 39073 / JCM 9320).